The chain runs to 412 residues: Probable cystathionine gamma-synthase 2 (412 aa).

Residues Tyr76, Arg78, Gly106, Met107, Tyr131, Ser226, and Thr228 each coordinate pyridoxal 5'-phosphate. Lys229 carries the post-translational modification N6-(pyridoxal phosphate)lysine.

The protein belongs to the trans-sulfuration enzymes family. Requires pyridoxal 5'-phosphate as cofactor.

It catalyses the reaction O-phospho-L-homoserine + L-cysteine = L,L-cystathionine + phosphate. The catalysed reaction is O-succinyl-L-homoserine + L-cysteine = L,L-cystathionine + succinate + H(+). The protein operates within amino-acid biosynthesis; L-methionine biosynthesis via de novo pathway; L-cystathionine from O-succinyl-L-homoserine: step 1/1. Functionally, catalyzes the first committed step of methionine (Met) biosynthesis. Catalyzes the formation of L-cystathionine from homoserine esters and L-cysteine, via a gamma-replacement reaction. In Arabidopsis thaliana (Mouse-ear cress), this protein is Probable cystathionine gamma-synthase 2.